The sequence spans 460 residues: ATP synthase subunit beta (460 aa).

150 to 157 serves as a coordination point for ATP; it reads GGAGVGKT.

It belongs to the ATPase alpha/beta chains family. In terms of assembly, F-type ATPases have 2 components, CF(1) - the catalytic core - and CF(0) - the membrane proton channel. CF(1) has five subunits: alpha(3), beta(3), gamma(1), delta(1), epsilon(1). CF(0) has three main subunits: a(1), b(2) and c(9-12). The alpha and beta chains form an alternating ring which encloses part of the gamma chain. CF(1) is attached to CF(0) by a central stalk formed by the gamma and epsilon chains, while a peripheral stalk is formed by the delta and b chains.

The protein localises to the cell inner membrane. It carries out the reaction ATP + H2O + 4 H(+)(in) = ADP + phosphate + 5 H(+)(out). Functionally, produces ATP from ADP in the presence of a proton gradient across the membrane. The catalytic sites are hosted primarily by the beta subunits. In Proteus mirabilis (strain HI4320), this protein is ATP synthase subunit beta.